The following is a 626-amino-acid chain: MHYPKVYDVIVIGGGHAGTEAALAAARMGRQTLLLTHNIETLGQMSCNPAIGGIGKSHLVREIDALGGAMALAADKGGIQFRILNSRKGAAVRATRAQADRVRYKAAIRHTLENQANLDIFQQAADDLIVEGDTVKGVVTQMGIRFDTKTVVLTTGTFLGGVIHIGLEKSSGGRAGDPPSIALSHRLRELNLPVGRLKTGTPPRIDARSVDFSVMTPQPGDFPSPVMSFMGDVSMHPEQVSCYITHTNEKTHDIIRGGLDRSPMYTGVIEGVGPRYCPSIEDKIHRFADKDSHQVFLEPEGLDTHELYPNGISTSLPFDVQFELVRSIRGMENAHILRPGYAIEYDYFNPQALKFTLETKAINNLYFAGQINGTTGYEEAGAQGLLAGLNAARRAWDQEQWTPKRDQAYMGVLVDDLITLGTKEPYRMFTSRAEYRLMLREDNADQRLTPVGREMGLVDDVRWAAYCEKMEAVETETARLAHLWAAPNNPMGKQFVEMTGADLSKECSAIDLLKRPNINFTQIAELTGSQVSTQVGDQIEIAVKYEGYINRQHEDVAQLKRLEETKIPADFDYDIVSGLSREITQKLKTVRPETLAQAHRIPGVTPAAVQLVMITIRKNAQTKKIA.

Residue 13 to 18 (GGGHAG) coordinates FAD. Residue 273–287 (GPRYCPSIEDKIHRF) participates in NAD(+) binding.

Belongs to the MnmG family. Homodimer. Heterotetramer of two MnmE and two MnmG subunits. It depends on FAD as a cofactor.

The protein resides in the cytoplasm. In terms of biological role, NAD-binding protein involved in the addition of a carboxymethylaminomethyl (cmnm) group at the wobble position (U34) of certain tRNAs, forming tRNA-cmnm(5)s(2)U34. The sequence is that of tRNA uridine 5-carboxymethylaminomethyl modification enzyme MnmG from Acinetobacter baylyi (strain ATCC 33305 / BD413 / ADP1).